The chain runs to 741 residues: Protein O-mannosyl-transferase TMTC4 (741 aa).

The Cytoplasmic portion of the chain corresponds to 1-14 (MAVLDTDLDHILPS). The helical transmembrane segment at 15–35 (SVLPPFWAKLVVGSVAIVCFA) threads the bilayer. Topologically, residues 36-111 (RSYDGDFVFD…FHPVGFHVVN (76 aa)) are extracellular. The N-linked (GlcNAc...) asparagine glycan is linked to Asn-78. The chain crosses the membrane as a helical span at residues 112–132 (ILLHSGISVLMVDVFSVLFGG). Residues 133–141 (LQYTSKGRR) are Cytoplasmic-facing. A helical transmembrane segment spans residues 142–162 (LHLAPRASLLAALLFAVHPVH). Over 163–165 (TEC) the chain is Extracellular. A helical transmembrane segment spans residues 166 to 186 (VAGVVGRADLLCALFFLLSFL). Over 187 to 198 (GYCKAFRESNKE) the chain is Cytoplasmic. A helical transmembrane segment spans residues 199-219 (GAHSSTFWVLLSIFLGAVAML). Over 220–224 (CKEQG) the chain is Extracellular. A helical membrane pass occupies residues 225–245 (ITVLGLNAVFDILVIGKFNVL). The Cytoplasmic portion of the chain corresponds to 246-268 (EIVQKVLHKDKSLENLGMLRNGG). A helical transmembrane segment spans residues 269 to 288 (LLFRMTLLTSGGAGMLYVRW). The Extracellular segment spans residues 289–354 (RIMGTGPPAF…PLIKSISDWR (66 aa)). The helical transmembrane segment at 355 to 375 (VIALAALWFCLIGLICQALCS) threads the bilayer. Over 376–382 (EDGHKRR) the chain is Cytoplasmic. Residues 383–403 (ILTLGLGFLVIPFLPASNLFF) form a helical membrane-spanning segment. Residues 404–412 (RVGFVVAER) lie on the Extracellular side of the membrane. The helical transmembrane segment at 413-433 (VLYLPSVGYCVLLTFGFGALS) threads the bilayer. At 434–440 (KHTKKKK) the chain is on the cytoplasmic side. The helical transmembrane segment at 441 to 461 (LIAAVVLGILFINTLRCVLRS) threads the bilayer. The Extracellular portion of the chain corresponds to 462 to 741 (GEWRSEEQLF…KLELMQKKAV (280 aa)). TPR repeat units follow at residues 482–515 (AKVH…NPKY), 516–549 (VHAM…QPDF), 550–583 (AAAW…RRKY), 584–617 (PDCY…KPEH), 618–651 (SLAW…IPND), 652–685 (HSLM…NPNA), and 686–719 (ASYH…DPTA). A glycan (N-linked (GlcNAc...) asparagine) is linked at Asn-497. Residue Asn-609 is glycosylated (N-linked (GlcNAc...) asparagine).

Belongs to the TMTC family.

The protein resides in the membrane. The protein localises to the endoplasmic reticulum. The enzyme catalyses a di-trans,poly-cis-dolichyl beta-D-mannosyl phosphate + L-seryl-[protein] = 3-O-(alpha-D-mannosyl)-L-seryl-[protein] + a di-trans,poly-cis-dolichyl phosphate + H(+). It carries out the reaction a di-trans,poly-cis-dolichyl beta-D-mannosyl phosphate + L-threonyl-[protein] = 3-O-(alpha-D-mannosyl)-L-threonyl-[protein] + a di-trans,poly-cis-dolichyl phosphate + H(+). The protein operates within protein modification; protein glycosylation. Transfers mannosyl residues to the hydroxyl group of serine or threonine residues. The 4 members of the TMTC family are O-mannosyl-transferases dedicated primarily to the cadherin superfamily, each member seems to have a distinct role in decorating the cadherin domains with O-linked mannose glycans at specific regions. Also acts as O-mannosyl-transferase on other proteins such as PDIA3. This is Protein O-mannosyl-transferase TMTC4 from Homo sapiens (Human).